A 444-amino-acid polypeptide reads, in one-letter code: Tubulin beta-8 chain (444 aa).

Residues 1 to 4 (MREI) carry the MREI motif motif. The GTP site is built by Gln-11, Glu-69, Ser-138, Gly-142, Thr-143, and Gly-144. Glu-69 is a Mg(2+) binding site. Residue Ser-172 is modified to Phosphoserine; by CDK1. GTP contacts are provided by Asn-204 and Asn-226. 5-glutamyl polyglutamate is present on Glu-436.

Belongs to the tubulin family. In terms of assembly, dimer of alpha and beta chains. A typical microtubule is a hollow water-filled tube with an outer diameter of 25 nm and an inner diameter of 15 nM. Alpha-beta heterodimers associate head-to-tail to form protofilaments running lengthwise along the microtubule wall with the beta-tubulin subunit facing the microtubule plus end conferring a structural polarity. Microtubules usually have 13 protofilaments but different protofilament numbers can be found in some organisms and specialized cells. The cofactor is Mg(2+). Post-translationally, some glutamate residues at the C-terminus are polyglycylated, resulting in polyglycine chains on the gamma-carboxyl group. Glycylation is mainly limited to tubulin incorporated into axonemes (cilia and flagella) whereas glutamylation is prevalent in neuronal cells, centrioles, axonemes, and the mitotic spindle. Both modifications can coexist on the same protein on adjacent residues, and lowering polyglycylation levels increases polyglutamylation, and reciprocally. Cilia and flagella glycylation is required for their stability and maintenance. Flagella glycylation controls sperm motility. Some glutamate residues at the C-terminus are polyglutamylated, resulting in polyglutamate chains on the gamma-carboxyl group. Polyglutamylation plays a key role in microtubule severing by spastin (SPAST). SPAST preferentially recognizes and acts on microtubules decorated with short polyglutamate tails: severing activity by SPAST increases as the number of glutamates per tubulin rises from one to eight, but decreases beyond this glutamylation threshold. Glutamylation is also involved in cilia motility. In terms of processing, phosphorylated on Ser-172 by CDK1 during the cell cycle, from metaphase to telophase, but not in interphase. This phosphorylation inhibits tubulin incorporation into microtubules.

The protein resides in the cytoplasm. It is found in the cytoskeleton. Its subcellular location is the spindle. Its function is as follows. Tubulin is the major constituent of microtubules, a cylinder consisting of laterally associated linear protofilaments composed of alpha- and beta-tubulin heterodimers. Microtubules grow by the addition of GTP-tubulin dimers to the microtubule end, where a stabilizing cap forms. Below the cap, tubulin dimers are in GDP-bound state, owing to GTPase activity of alpha-tubulin. Has a key role in meiotic spindle assembly and oocyte maturation. The chain is Tubulin beta-8 chain (TUBB8) from Papio hamadryas (Hamadryas baboon).